Reading from the N-terminus, the 79-residue chain is Acyl carrier protein (79 aa).

The 76-residue stretch at 2–77 (SEIGERVKKI…DAVKFLEKNA (76 aa)) folds into the Carrier domain. At Ser37 the chain carries O-(pantetheine 4'-phosphoryl)serine.

This sequence belongs to the acyl carrier protein (ACP) family. 4'-phosphopantetheine is transferred from CoA to a specific serine of apo-ACP by AcpS. This modification is essential for activity because fatty acids are bound in thioester linkage to the sulfhydryl of the prosthetic group.

The protein resides in the cytoplasm. The protein operates within lipid metabolism; fatty acid biosynthesis. In terms of biological role, carrier of the growing fatty acid chain in fatty acid biosynthesis. The protein is Acyl carrier protein of Rhodopseudomonas palustris (strain BisA53).